The chain runs to 433 residues: Phosphoribosylamine--glycine ligase (433 aa).

The ATP-grasp domain occupies 111–317 (EFMARNNIKG…FVDICEAIVD (207 aa)). 138-194 (EDNPDVVVKPAGLTGGKGVKVMGEHMHTLEEAREYVKSVLEHDRVVIEERLKGEEVT) is a binding site for ATP. Mg(2+) is bound by residues Q275, E287, and N289. Mn(2+) is bound by residues Q275, E287, and N289.

The protein belongs to the GARS family. It depends on Mg(2+) as a cofactor. Mn(2+) serves as cofactor.

It catalyses the reaction 5-phospho-beta-D-ribosylamine + glycine + ATP = N(1)-(5-phospho-beta-D-ribosyl)glycinamide + ADP + phosphate + H(+). It functions in the pathway purine metabolism; IMP biosynthesis via de novo pathway; N(1)-(5-phospho-D-ribosyl)glycinamide from 5-phospho-alpha-D-ribose 1-diphosphate: step 2/2. This is Phosphoribosylamine--glycine ligase from Methanocella arvoryzae (strain DSM 22066 / NBRC 105507 / MRE50).